The primary structure comprises 1056 residues: Carbamoyl phosphate synthase large chain (1056 aa).

Residues 1-399 (MKIDVSKVIV…AFQKAIRMLD (399 aa)) form a carboxyphosphate synthetic domain region. The ATP site is built by Arg127, Arg167, Gly173, Gly174, Lys206, Leu208, Glu213, Gly239, Val240, His241, Gln282, and Glu296. The ATP-grasp 1 domain occupies 131–325 (QKTMKKVGLP…LAYIATKLAI (195 aa)). Residues Gln282, Glu296, and Asn298 each contribute to the Mg(2+) site. Residues Gln282, Glu296, and Asn298 each contribute to the Mn(2+) site. The segment at 400-536 (IGDELIGKYY…VTYDGVENDI (137 aa)) is oligomerization domain. The interval 537–919 (PKPKKPSILV…LKSWLSVKPN (383 aa)) is carbamoyl phosphate synthetic domain. The region spanning 661–849 (SKLLEKLGIP…LMELSAQAVL (189 aa)) is the ATP-grasp 2 domain. Residues Arg697, Lys736, Ile738, Glu742, Gly766, Val767, His768, Ser769, Gln809, and Glu820 each coordinate ATP. Gln809, Glu820, and Asn822 together coordinate Mg(2+). Mn(2+) is bound by residues Gln809, Glu820, and Asn822. The MGS-like domain maps to 915–1043 (SVKPNELPKT…REYWIRKIEE (129 aa)). The allosteric domain stretch occupies residues 920 to 1056 (ELPKTSALIY…EYAASVVLRR (137 aa)).

The protein belongs to the CarB family. As to quaternary structure, composed of two chains; the small (or glutamine) chain promotes the hydrolysis of glutamine to ammonia, which is used by the large (or ammonia) chain to synthesize carbamoyl phosphate. Tetramer of heterodimers (alpha,beta)4. Mg(2+) is required as a cofactor. The cofactor is Mn(2+).

The catalysed reaction is hydrogencarbonate + L-glutamine + 2 ATP + H2O = carbamoyl phosphate + L-glutamate + 2 ADP + phosphate + 2 H(+). It catalyses the reaction hydrogencarbonate + NH4(+) + 2 ATP = carbamoyl phosphate + 2 ADP + phosphate + 2 H(+). The protein operates within amino-acid biosynthesis; L-arginine biosynthesis; carbamoyl phosphate from bicarbonate: step 1/1. Its pathway is pyrimidine metabolism; UMP biosynthesis via de novo pathway; (S)-dihydroorotate from bicarbonate: step 1/3. Functionally, large subunit of the glutamine-dependent carbamoyl phosphate synthetase (CPSase). CPSase catalyzes the formation of carbamoyl phosphate from the ammonia moiety of glutamine, carbonate, and phosphate donated by ATP, constituting the first step of 2 biosynthetic pathways, one leading to arginine and/or urea and the other to pyrimidine nucleotides. The large subunit (synthetase) binds the substrates ammonia (free or transferred from glutamine from the small subunit), hydrogencarbonate and ATP and carries out an ATP-coupled ligase reaction, activating hydrogencarbonate by forming carboxy phosphate which reacts with ammonia to form carbamoyl phosphate. The chain is Carbamoyl phosphate synthase large chain from Pyrococcus furiosus (strain ATCC 43587 / DSM 3638 / JCM 8422 / Vc1).